We begin with the raw amino-acid sequence, 715 residues long: Fatty acid oxidation complex subunit alpha (715 aa).

The tract at residues 1–190 is enoyl-CoA hydratase/isomerase; the sequence is MIYEGKAITV…KVGAVDAVVA (190 aa). D297 serves as a coordination point for substrate. Residues 312 to 715 form a 3-hydroxyacyl-CoA dehydrogenase region; sequence HDVKQAAVLG…MAKNGQRFFN (404 aa). Residues M325, D344, 401 to 403, K408, and S430 each bind NAD(+); that span reads VVE. Catalysis depends on H451, which acts as the For 3-hydroxyacyl-CoA dehydrogenase activity. Residue N454 coordinates NAD(+). N501 and Y660 together coordinate substrate.

The protein in the N-terminal section; belongs to the enoyl-CoA hydratase/isomerase family. In the C-terminal section; belongs to the 3-hydroxyacyl-CoA dehydrogenase family. In terms of assembly, heterotetramer of two alpha chains (FadB) and two beta chains (FadA).

It catalyses the reaction a (3S)-3-hydroxyacyl-CoA + NAD(+) = a 3-oxoacyl-CoA + NADH + H(+). The enzyme catalyses a (3S)-3-hydroxyacyl-CoA = a (2E)-enoyl-CoA + H2O. The catalysed reaction is a 4-saturated-(3S)-3-hydroxyacyl-CoA = a (3E)-enoyl-CoA + H2O. It carries out the reaction (3S)-3-hydroxybutanoyl-CoA = (3R)-3-hydroxybutanoyl-CoA. It catalyses the reaction a (3Z)-enoyl-CoA = a 4-saturated (2E)-enoyl-CoA. The enzyme catalyses a (3E)-enoyl-CoA = a 4-saturated (2E)-enoyl-CoA. Its pathway is lipid metabolism; fatty acid beta-oxidation. Involved in the aerobic and anaerobic degradation of long-chain fatty acids via beta-oxidation cycle. Catalyzes the formation of 3-oxoacyl-CoA from enoyl-CoA via L-3-hydroxyacyl-CoA. It can also use D-3-hydroxyacyl-CoA and cis-3-enoyl-CoA as substrate. The polypeptide is Fatty acid oxidation complex subunit alpha (Pseudomonas putida (strain ATCC 700007 / DSM 6899 / JCM 31910 / BCRC 17059 / LMG 24140 / F1)).